Here is a 211-residue protein sequence, read N- to C-terminus: RING finger protein 222 (211 aa).

The RING-type zinc-finger motif lies at 14-65 (CPVCYEKFRDLDGASRTLSCGHVFCHDCLVKYLLSTRVDGQVQRTIVCPICR). A helical transmembrane segment spans residues 187 to 207 (LITLIAVVAVVAAILPWVLLV).

The protein localises to the membrane. The protein is RING finger protein 222 (Rnf222) of Mus musculus (Mouse).